Here is a 1484-residue protein sequence, read N- to C-terminus: Chromosome partition protein MukB (1484 aa).

Residue Gly-34–Ser-41 coordinates ATP. 3 coiled-coil regions span residues Leu-326–Gln-418, Leu-444–His-472, and Arg-509–Pro-602. The tract at residues Pro-666–Arg-783 is flexible hinge. Coiled-coil stretches lie at residues Glu-835–Glu-923, Glu-977–Gly-1116, and Val-1209–Val-1265. A disordered region spans residues Ala-1049–Arg-1074. Over residues Ser-1051–His-1065 the composition is skewed to basic and acidic residues.

It belongs to the SMC family. MukB subfamily. As to quaternary structure, homodimerization via its hinge domain. Binds to DNA via its C-terminal region. Interacts, and probably forms a ternary complex, with MukE and MukF via its C-terminal region. The complex formation is stimulated by calcium or magnesium. Interacts with tubulin-related protein FtsZ.

Its subcellular location is the cytoplasm. The protein localises to the nucleoid. Plays a central role in chromosome condensation, segregation and cell cycle progression. Functions as a homodimer, which is essential for chromosome partition. Involved in negative DNA supercoiling in vivo, and by this means organize and compact chromosomes. May achieve or facilitate chromosome segregation by condensation DNA from both sides of a centrally located replisome during cell division. The sequence is that of Chromosome partition protein MukB from Salmonella dublin (strain CT_02021853).